The following is a 344-amino-acid chain: Biotin synthase (344 aa).

One can recognise a Radical SAM core domain in the interval 40 to 267 (AEVQVSTLLS…KSMVRLSAGR (228 aa)). Positions 55, 59, and 62 each coordinate [4Fe-4S] cluster. [2Fe-2S] cluster contacts are provided by cysteine 99, cysteine 130, cysteine 190, and arginine 262.

The protein belongs to the radical SAM superfamily. Biotin synthase family. Homodimer. The cofactor is [4Fe-4S] cluster. [2Fe-2S] cluster is required as a cofactor.

The catalysed reaction is (4R,5S)-dethiobiotin + (sulfur carrier)-SH + 2 reduced [2Fe-2S]-[ferredoxin] + 2 S-adenosyl-L-methionine = (sulfur carrier)-H + biotin + 2 5'-deoxyadenosine + 2 L-methionine + 2 oxidized [2Fe-2S]-[ferredoxin]. It functions in the pathway cofactor biosynthesis; biotin biosynthesis; biotin from 7,8-diaminononanoate: step 2/2. In terms of biological role, catalyzes the conversion of dethiobiotin (DTB) to biotin by the insertion of a sulfur atom into dethiobiotin via a radical-based mechanism. This Xanthomonas oryzae pv. oryzae (strain PXO99A) protein is Biotin synthase.